A 137-amino-acid polypeptide reads, in one-letter code: Large ribosomal subunit protein uL16 (137 aa).

The protein belongs to the universal ribosomal protein uL16 family. As to quaternary structure, part of the 50S ribosomal subunit.

Binds 23S rRNA and is also seen to make contacts with the A and possibly P site tRNAs. The sequence is that of Large ribosomal subunit protein uL16 from Tolumonas auensis (strain DSM 9187 / NBRC 110442 / TA 4).